Consider the following 210-residue polypeptide: Urease accessory protein UreE (210 aa).

Residues 144–210 (PEGGAYAAGG…GHAHPHSLAR (67 aa)) form a disordered region. The segment covering 156–202 (HGHDHPHHDHGHDHAHAHAHGTEACDHEHSHDHDCGHHHDHGQDYGH) has biased composition (basic and acidic residues).

This sequence belongs to the UreE family.

The protein localises to the cytoplasm. Its function is as follows. Involved in urease metallocenter assembly. Binds nickel. Probably functions as a nickel donor during metallocenter assembly. In Paracidovorax citrulli (strain AAC00-1) (Acidovorax citrulli), this protein is Urease accessory protein UreE.